The sequence spans 274 residues: Orotidine 5'-phosphate decarboxylase (274 aa).

Lys-95 (proton donor) is an active-site residue.

This sequence belongs to the OMP decarboxylase family. Type 2 subfamily.

The catalysed reaction is orotidine 5'-phosphate + H(+) = UMP + CO2. It functions in the pathway pyrimidine metabolism; UMP biosynthesis via de novo pathway; UMP from orotate: step 2/2. The chain is Orotidine 5'-phosphate decarboxylase from Paracidovorax citrulli (strain AAC00-1) (Acidovorax citrulli).